The sequence spans 472 residues: Citrate synthase, mitochondrial (472 aa).

Active-site residues include His308, His354, and Asp409.

This sequence belongs to the citrate synthase family. As to quaternary structure, homodimer.

Its subcellular location is the mitochondrion matrix. The catalysed reaction is oxaloacetate + acetyl-CoA + H2O = citrate + CoA + H(+). The protein operates within carbohydrate metabolism; tricarboxylic acid cycle; isocitrate from oxaloacetate: step 1/2. This is Citrate synthase, mitochondrial (CS) from Daucus carota (Wild carrot).